The following is a 528-amino-acid chain: Homoserine O-acetyltransferase (528 aa).

Positions 60–245 constitute an AB hydrolase-1 domain; it reads LVICHALTGS…AALLTYRSRD (186 aa). The active-site Nucleophile is the serine 154. Disordered stretches follow at residues 250 to 335 and 388 to 413; these read RFGR…VKTQ and DLSAPSRDTSLSSLSSGLPSSPDATE. Residues 273–282 show a composition bias toward polar residues; it reads QETTDPSVPS. Basic and acidic residues predominate over residues 295 to 304; it reads AWREHNDGHR. Residues 389–409 are compositionally biased toward low complexity; the sequence is LSAPSRDTSLSSLSSGLPSSP. Active-site residues include aspartate 438 and histidine 467.

It belongs to the AB hydrolase superfamily. MetX family.

It is found in the cytoplasm. The catalysed reaction is L-homoserine + acetyl-CoA = O-acetyl-L-homoserine + CoA. It functions in the pathway amino-acid biosynthesis; L-methionine biosynthesis via de novo pathway; O-acetyl-L-homoserine from L-homoserine: step 1/1. Its activity is regulated as follows. Inhibited by 6-carbamoyl-3a,4,5,9b-tetrahydro-3H-cyclopenta[ c]quinoline-4-carboxylic acid (CTCQC). Its function is as follows. Commits homoserine to the methionine biosynthesis pathway by catalyzing its O-acetylation. The protein is Homoserine O-acetyltransferase of Cryptococcus neoformans var. grubii serotype A (strain H99 / ATCC 208821 / CBS 10515 / FGSC 9487) (Filobasidiella neoformans var. grubii).